The chain runs to 53 residues: Sec-independent protein translocase protein TatA (53 aa).

A helical membrane pass occupies residues 1-21 (MGMSFSHLLIVLLIIFVLFGA).

Belongs to the TatA/E family. As to quaternary structure, the Tat system comprises two distinct complexes: a TatABC complex, containing multiple copies of TatA, TatB and TatC subunits, and a separate TatA complex, containing only TatA subunits. Substrates initially bind to the TatABC complex, which probably triggers association of the separate TatA complex to form the active translocon.

The protein localises to the cell inner membrane. Part of the twin-arginine translocation (Tat) system that transports large folded proteins containing a characteristic twin-arginine motif in their signal peptide across membranes. TatA could form the protein-conducting channel of the Tat system. The polypeptide is Sec-independent protein translocase protein TatA (Rickettsia akari (strain Hartford)).